The following is a 316-amino-acid chain: Ribosomal RNA small subunit methyltransferase H (316 aa).

S-adenosyl-L-methionine contacts are provided by residues 32–34 (AGH), Asp-52, Phe-79, Asp-106, and Gln-113.

The protein belongs to the methyltransferase superfamily. RsmH family.

It is found in the cytoplasm. The enzyme catalyses cytidine(1402) in 16S rRNA + S-adenosyl-L-methionine = N(4)-methylcytidine(1402) in 16S rRNA + S-adenosyl-L-homocysteine + H(+). In terms of biological role, specifically methylates the N4 position of cytidine in position 1402 (C1402) of 16S rRNA. This is Ribosomal RNA small subunit methyltransferase H from Paenibacillus sp. (strain JDR-2).